A 272-amino-acid polypeptide reads, in one-letter code: Expansin-B16 (272 aa).

An N-terminal signal peptide occupies residues 1-25 (MAAFSSSSSAPMLIRSVLFVSLLSA). One can recognise an Expansin-like EG45 domain in the interval 63 to 173 (GGACGYGTLV…RRTACKYGGK (111 aa)). 3 disulfide bridges follow: cysteine 66–cysteine 95, cysteine 98–cysteine 168, and cysteine 103–cysteine 109. The Expansin-like CBD domain maps to 186–267 (FWLSLLVEFE…NWTPKATYTS (82 aa)).

This sequence belongs to the expansin family. Expansin B subfamily.

Its subcellular location is the secreted. The protein localises to the cell wall. It is found in the membrane. May cause loosening and extension of plant cell walls by disrupting non-covalent bonding between cellulose microfibrils and matrix glucans. No enzymatic activity has been found. May be required for rapid internodal elongation in deepwater rice during submergence. The polypeptide is Expansin-B16 (EXPB16) (Oryza sativa subsp. japonica (Rice)).